The chain runs to 429 residues: Adenylosuccinate synthetase (429 aa).

Residues 12-18 (GDEGKGK) and 40-42 (GHT) contribute to the GTP site. The Proton acceptor role is filled by Asp-13. Asp-13 and Gly-40 together coordinate Mg(2+). Residues 13–16 (DEGK), 38–41 (NAGH), Thr-129, Arg-143, Gln-223, Thr-238, and Arg-302 contribute to the IMP site. Catalysis depends on His-41, which acts as the Proton donor. 298-304 (VVTGRKR) contacts substrate. GTP is bound by residues Arg-304, 330 to 332 (KLD), and 412 to 414 (STS).

It belongs to the adenylosuccinate synthetase family. In terms of assembly, homodimer. Mg(2+) is required as a cofactor.

The protein localises to the cytoplasm. It carries out the reaction IMP + L-aspartate + GTP = N(6)-(1,2-dicarboxyethyl)-AMP + GDP + phosphate + 2 H(+). The protein operates within purine metabolism; AMP biosynthesis via de novo pathway; AMP from IMP: step 1/2. Functionally, plays an important role in the de novo pathway of purine nucleotide biosynthesis. Catalyzes the first committed step in the biosynthesis of AMP from IMP. The protein is Adenylosuccinate synthetase of Brucella abortus (strain 2308).